The following is a 73-amino-acid chain: Large ribosomal subunit protein uL24 (73 aa).

Residues 51-65 (DDNPKGGFIHKEKPM) show a composition bias toward basic and acidic residues. The tract at residues 51–73 (DDNPKGGFIHKEKPMHISNVKKA) is disordered.

This sequence belongs to the universal ribosomal protein uL24 family. Part of the 50S ribosomal subunit.

Functionally, one of two assembly initiator proteins, it binds directly to the 5'-end of the 23S rRNA, where it nucleates assembly of the 50S subunit. One of the proteins that surrounds the polypeptide exit tunnel on the outside of the subunit. In Helicobacter pylori (strain Shi470), this protein is Large ribosomal subunit protein uL24.